The following is a 391-amino-acid chain: Putative 12-oxophytodienoate reductase 6 (391 aa).

FMN is bound by residues 42 to 44 (PMT), Ala-75, and Gln-117. 189–192 (HGAN) provides a ligand contact to substrate. The active-site Proton donor is the Tyr-194. Arg-241 provides a ligand contact to FMN. Arg-282 is a substrate binding site. Residues Gly-312 and 333–334 (GR) each bind FMN. The interval 372 to 391 (YPFLDEHHHDDDDDSNAPSA) is disordered. Acidic residues predominate over residues 382-391 (DDDDSNAPSA).

The protein belongs to the NADH:flavin oxidoreductase/NADH oxidase family. It depends on FMN as a cofactor.

In terms of biological role, putative oxophytodienoate reductase that may be involved in the biosynthesis or metabolism of oxylipin signaling molecules. The sequence is that of Putative 12-oxophytodienoate reductase 6 (OPR6) from Oryza sativa subsp. japonica (Rice).